A 124-amino-acid polypeptide reads, in one-letter code: Large ribosomal subunit protein bL12 (124 aa).

A disordered region spans residues lysine 99–lysine 124. Basic and acidic residues predominate over residues glycine 101–leucine 114. The segment covering glutamate 115–lysine 124 has biased composition (low complexity).

Belongs to the bacterial ribosomal protein bL12 family. Homodimer. Part of the ribosomal stalk of the 50S ribosomal subunit. Forms a multimeric L10(L12)X complex, where L10 forms an elongated spine to which 2 to 4 L12 dimers bind in a sequential fashion. Binds GTP-bound translation factors.

Functionally, forms part of the ribosomal stalk which helps the ribosome interact with GTP-bound translation factors. Is thus essential for accurate translation. This is Large ribosomal subunit protein bL12 from Campylobacter hominis (strain ATCC BAA-381 / DSM 21671 / CCUG 45161 / LMG 19568 / NCTC 13146 / CH001A).